The primary structure comprises 448 residues: Probable protein phosphatase 2C 74 (448 aa).

The tract at residues 1–48 (MGSCLSSSGGGGSRRSLHGSPHVPGPGRRKRPPKRRPGSCSSSFDNTE) is disordered. Residue Gly-2 is the site of N-myristoyl glycine attachment. Residues 27-37 (GRRKRPPKRRP) are compositionally biased toward basic residues. Residues 67 to 384 (TVSLFSQQGK…DDCAVVCLFL (318 aa)) form the PPM-type phosphatase domain. Mn(2+)-binding residues include Asp-103, Gly-104, Asp-329, and Asp-375. Residues 401 to 431 (HINNGVTEPEPDTASSSTPDSGTGSPELNGV) form a disordered region. Residues 412 to 426 (DTASSSTPDSGTGSP) are compositionally biased toward low complexity.

Belongs to the PP2C family. As to quaternary structure, interacts with KIN10. It depends on Mg(2+) as a cofactor. The cofactor is Mn(2+). In terms of tissue distribution, expressed in the whole plant.

The protein resides in the cell membrane. It carries out the reaction O-phospho-L-seryl-[protein] + H2O = L-seryl-[protein] + phosphate. It catalyses the reaction O-phospho-L-threonyl-[protein] + H2O = L-threonyl-[protein] + phosphate. Functionally, acts as a protein phosphatase. The polypeptide is Probable protein phosphatase 2C 74 (Arabidopsis thaliana (Mouse-ear cress)).